A 234-amino-acid polypeptide reads, in one-letter code: Sugar fermentation stimulation protein homolog (234 aa).

Belongs to the SfsA family.

The protein is Sugar fermentation stimulation protein homolog of Shewanella halifaxensis (strain HAW-EB4).